The primary structure comprises 124 residues: Large ribosomal subunit protein bL21 (124 aa).

This sequence belongs to the bacterial ribosomal protein bL21 family. As to quaternary structure, part of the 50S ribosomal subunit. Contacts protein L20.

In terms of biological role, this protein binds to 23S rRNA in the presence of protein L20. This chain is Large ribosomal subunit protein bL21, found in Sinorhizobium medicae (strain WSM419) (Ensifer medicae).